The primary structure comprises 136 residues: 6,7-dimethyl-8-ribityllumazine synthase (136 aa).

Residues F11, 43-45, and 67-69 each bind 5-amino-6-(D-ribitylamino)uracil; these read VYD and CVI. Position 72–73 (72–73) interacts with (2S)-2-hydroxy-3-oxobutyl phosphate; that stretch reads DT. Residue H75 is the Proton donor of the active site. L100 is a binding site for 5-amino-6-(D-ribitylamino)uracil. Residue R115 participates in (2S)-2-hydroxy-3-oxobutyl phosphate binding.

Belongs to the DMRL synthase family. As to quaternary structure, forms an icosahedral capsid composed of 60 subunits, arranged as a dodecamer of pentamers.

It carries out the reaction (2S)-2-hydroxy-3-oxobutyl phosphate + 5-amino-6-(D-ribitylamino)uracil = 6,7-dimethyl-8-(1-D-ribityl)lumazine + phosphate + 2 H2O + H(+). It participates in cofactor biosynthesis; riboflavin biosynthesis; riboflavin from 2-hydroxy-3-oxobutyl phosphate and 5-amino-6-(D-ribitylamino)uracil: step 1/2. Catalyzes the formation of 6,7-dimethyl-8-ribityllumazine by condensation of 5-amino-6-(D-ribitylamino)uracil with 3,4-dihydroxy-2-butanone 4-phosphate. This is the penultimate step in the biosynthesis of riboflavin. This chain is 6,7-dimethyl-8-ribityllumazine synthase, found in Methanococcus aeolicus (strain ATCC BAA-1280 / DSM 17508 / OCM 812 / Nankai-3).